The chain runs to 247 residues: 5-oxoprolinase subunit A (247 aa).

It belongs to the LamB/PxpA family. As to quaternary structure, forms a complex composed of PxpA, PxpB and PxpC.

It catalyses the reaction 5-oxo-L-proline + ATP + 2 H2O = L-glutamate + ADP + phosphate + H(+). Catalyzes the cleavage of 5-oxoproline to form L-glutamate coupled to the hydrolysis of ATP to ADP and inorganic phosphate. This chain is 5-oxoprolinase subunit A, found in Vibrio vulnificus (strain CMCP6).